Here is a 263-residue protein sequence, read N- to C-terminus: Transcription factor bHLH27 (263 aa).

Low complexity predominate over residues 32 to 47; it reads EAFSGSGESSSPDGAA. The interval 32–61 is disordered; the sequence is EAFSGSGESSSPDGAATSPASSKNVVSERN. Positions 49 to 58 are enriched in polar residues; that stretch reads SPASSKNVVS. Residues 50–99 form the bHLH domain; the sequence is PASSKNVVSERNRRQKLNQRLFALRSVVPNISKLDKASVIKDSIDYMQEL.

As to quaternary structure, homodimer. In terms of tissue distribution, expressed constitutively in roots, leaves, stems, and flowers.

It localises to the nucleus. In Arabidopsis thaliana (Mouse-ear cress), this protein is Transcription factor bHLH27 (BHLH27).